A 392-amino-acid polypeptide reads, in one-letter code: Frizzled-9 (392 aa).

The Extracellular portion of the chain corresponds to 1–35 (ACDNPEKFQYVEKSLSCAPRCSPGVDVYWSREDKD). Residues 36–56 (FAFVWMAVWSTLCFVSTAFTV) form a helical membrane-spanning segment. Residues 57–72 (LTFLLDPHRFQYPERP) are Cytoplasmic-facing. A helical transmembrane segment spans residues 73–93 (IIFLSMCYNVYSVAFIIRSVA). Residues 94–119 (GAETIACDRENGELYIIQEGLESTGC) are Extracellular-facing. A helical transmembrane segment spans residues 120–140 (TIVFLILYYFGMASSLWWVVL). Over 141–161 (TLTWFLAAGKKWGHEAIEAHS) the chain is Cytoplasmic. The helical transmembrane segment at 162–182 (SYFHMAAWGIPAMKTIVILTM) threads the bilayer. The Extracellular portion of the chain corresponds to 183-206 (RKVAGDELTGLCYVGSMDVSALTG). Residues 207–227 (FVLIPLSCYLVVGTSFILTGF) form a helical membrane-spanning segment. The Cytoplasmic portion of the chain corresponds to 228 to 253 (VALFHIRKIMKTGGTNTEKLEKLMVK). Residues 254-274 (IGVFSILYTVPATCVIVCYFY) form a helical membrane-spanning segment. The Extracellular segment spans residues 275-312 (ERLNVDYWNLRALERACVPLPGRRAADCSLEASVPTVA). A helical membrane pass occupies residues 313 to 333 (VFMLKIFMSLVVGITSGVWVW). Over 334–392 (SSKTLQTWQSLCNRKLGVRTRGKPCSGVSCGGVHCHYKAPTVMLHMTKTDPYLDNPTHV) the chain is Cytoplasmic. The Lys-Thr-X-X-X-Trp motif, mediates interaction with the PDZ domain of Dvl family members motif lies at 336–341 (KTLQTW). Residues 390–392 (THV) carry the PDZ-binding motif.

This sequence belongs to the G-protein coupled receptor Fz/Smo family.

It is found in the cell membrane. Functionally, receptor for WNT2 that is coupled to the beta-catenin canonical signaling pathway, which leads to the activation of disheveled proteins, inhibition of GSK-3 kinase, nuclear accumulation of beta-catenin and activation of Wnt target genes. In Gallus gallus (Chicken), this protein is Frizzled-9 (FZD9).